The chain runs to 204 residues: VEL1-related protein AC977.05c (204 aa).

Residues 1 to 17 (MIFKNLISLFFIGLATA) form the signal peptide.

Belongs to the VEL1 family.

The protein resides in the cytoplasm. It is found in the cytosol. The chain is VEL1-related protein AC977.05c from Schizosaccharomyces pombe (strain 972 / ATCC 24843) (Fission yeast).